Reading from the N-terminus, the 397-residue chain is Succinate--CoA ligase [ADP-forming] subunit beta (397 aa).

Positions 9–254 (KELLRGYGAP…TSEEDEKEIE (246 aa)) constitute an ATP-grasp domain. ATP-binding positions include Lys-46, 53-55 (GRG), Glu-109, Ala-112, and Glu-117. Asn-209 and Asp-223 together coordinate Mg(2+). Residues Asn-274 and 331–333 (GIM) each bind substrate.

This sequence belongs to the succinate/malate CoA ligase beta subunit family. As to quaternary structure, heterotetramer of two alpha and two beta subunits. Mg(2+) is required as a cofactor.

It catalyses the reaction succinate + ATP + CoA = succinyl-CoA + ADP + phosphate. The enzyme catalyses GTP + succinate + CoA = succinyl-CoA + GDP + phosphate. Its pathway is carbohydrate metabolism; tricarboxylic acid cycle; succinate from succinyl-CoA (ligase route): step 1/1. In terms of biological role, succinyl-CoA synthetase functions in the citric acid cycle (TCA), coupling the hydrolysis of succinyl-CoA to the synthesis of either ATP or GTP and thus represents the only step of substrate-level phosphorylation in the TCA. The beta subunit provides nucleotide specificity of the enzyme and binds the substrate succinate, while the binding sites for coenzyme A and phosphate are found in the alpha subunit. This chain is Succinate--CoA ligase [ADP-forming] subunit beta, found in Chelativorans sp. (strain BNC1).